Here is a 529-residue protein sequence, read N- to C-terminus: Mitochondrial inner membrane magnesium transporter MIT1 (529 aa).

Coiled-coil stretches lie at residues lysine 336 to glutamate 388 and leucine 416 to aspartate 450. A helical membrane pass occupies residues phenylalanine 456–isoleucine 476. Residues threonine 477–aspartate 492 are Mitochondrial intermembrane-facing. Residues tyrosine 493 to threonine 513 traverse the membrane as a helical segment. Over lysine 514–lysine 529 the chain is Mitochondrial matrix.

The protein belongs to the CorA metal ion transporter (MIT) (TC 1.A.35) family.

The protein resides in the mitochondrion inner membrane. Functionally, mitochondrial inner membrane magnesium transporter required for mitochondrial magnesium homeostasis. Involved in the development of the sporozoite in the mosquito vector midgut. The polypeptide is Mitochondrial inner membrane magnesium transporter MIT1 (Plasmodium falciparum (isolate 3D7)).